The primary structure comprises 216 residues: Soluble inorganic pyrophosphatase 5 (216 aa).

Residues 1-20 (MNGEEVKTSQPQKKLQNPTP) form a disordered region. Polar residues predominate over residues 8-20 (TSQPQKKLQNPTP). 2 residues coordinate substrate: K66 and R80. The Proton donor role is filled by Y88. Y92 lines the substrate pocket. The Mg(2+) site is built by D102, D107, and D139. Y176 contacts substrate.

Belongs to the PPase family. Mg(2+) serves as cofactor.

Its subcellular location is the cytoplasm. The catalysed reaction is diphosphate + H2O = 2 phosphate + H(+). This Arabidopsis thaliana (Mouse-ear cress) protein is Soluble inorganic pyrophosphatase 5.